Consider the following 302-residue polypeptide: Glutamyl-Q tRNA(Asp) synthetase (302 aa).

Residues 13-17 and Asp-49 contribute to the L-glutamate site; that span reads RFAPS. A 'HIGH' region motif is present at residues 16–26; the sequence is PSPTGPLHLGS. Residues Cys-105, Cys-107, Tyr-119, and Cys-123 each coordinate Zn(2+). The L-glutamate site is built by Tyr-178 and Arg-196. Positions 234–238 match the 'KMSKS' region motif; sequence KLSKQ. Lys-237 is a binding site for ATP.

This sequence belongs to the class-I aminoacyl-tRNA synthetase family. GluQ subfamily. Requires Zn(2+) as cofactor.

Functionally, catalyzes the tRNA-independent activation of glutamate in presence of ATP and the subsequent transfer of glutamate onto a tRNA(Asp). Glutamate is transferred on the 2-amino-5-(4,5-dihydroxy-2-cyclopenten-1-yl) moiety of the queuosine in the wobble position of the QUC anticodon. This chain is Glutamyl-Q tRNA(Asp) synthetase, found in Methylococcus capsulatus (strain ATCC 33009 / NCIMB 11132 / Bath).